We begin with the raw amino-acid sequence, 459 residues long: Methionine aminopeptidase 2-2 (459 aa).

Residues Met1–Gly12 show a composition bias toward basic and acidic residues. The interval Met1–Ser87 is disordered. The span at Gly43–Glu54 shows a compositional bias: acidic residues. A compositionally biased stretch (basic and acidic residues) spans Lys55 to Ala66. Residues Lys67–Lys79 are compositionally biased toward basic residues. His210 provides a ligand contact to substrate. Residues Asp231, Asp242, and His311 each contribute to the a divalent metal cation site. His319 serves as a coordination point for substrate. A divalent metal cation contacts are provided by Glu344 and Glu440.

The protein belongs to the peptidase M24A family. Methionine aminopeptidase eukaryotic type 2 subfamily. Requires Co(2+) as cofactor. The cofactor is Zn(2+). It depends on Mn(2+) as a cofactor. Fe(2+) is required as a cofactor.

It localises to the cytoplasm. It carries out the reaction Release of N-terminal amino acids, preferentially methionine, from peptides and arylamides.. In terms of biological role, cotranslationally removes the N-terminal methionine from nascent proteins. The N-terminal methionine is often cleaved when the second residue in the primary sequence is small and uncharged (Met-Ala-, Cys, Gly, Pro, Ser, Thr, or Val). The chain is Methionine aminopeptidase 2-2 from Pyrenophora teres f. teres (strain 0-1) (Barley net blotch fungus).